We begin with the raw amino-acid sequence, 622 residues long: Intermediate filament protein ifc-2 (622 aa).

The segment at 19–54 (SGTYASGFGQLVSGMSSAGAICTTQIRDAREREKRE) is head. In terms of domain architecture, IF rod spans 51–399 (EKREIGLLND…ILLNGANVTT (349 aa)). The interval 55–86 (IGLLNDRLADYIEKVRFLEAQNRCLSHDIDIL) is coil 1A. The tract at residues 87–99 (RNGFSGGGHVSGL) is linker 1. Residues 100-237 (FDAEINQAKH…TENNVRIEQE (138 aa)) are coil 1B. The interval 238 to 255 (LVFIRRDTTADNRDYFRH) is linker 12. The tract at residues 256-399 (ELQAAIRDIR…ILLNGANVTT (144 aa)) is coil 2. Residues 400–550 (YTSNTHGSGS…RVDVGGFRIE (151 aa)) are tail. One can recognise an LTD domain in the interval 509-622 (SGRHFHSWYL…EERAWFVYLD (114 aa)).

It belongs to the intermediate filament family. As to expression, expressed in intestinal cells and at desmosomes in intestine and pharynx of the larva.

The protein resides in the cytoplasm. Functionally, cytoplasmic intermediate filaments provide mechanical strength to cells. Not essential protein, although its absence leads to mild defects in locomotion. The sequence is that of Intermediate filament protein ifc-2 (ifc-2) from Caenorhabditis elegans.